A 192-amino-acid polypeptide reads, in one-letter code: Der GTPase-activating protein YihI (192 aa).

The tract at residues 1–80 is disordered; sequence MSRTKKTRRI…KAAVKEVKDP (80 aa). Basic and acidic residues-rich tracts occupy residues 9-25, 37-48, and 65-80; these read RITDIMPARKADKKPEQ, TRYELDAKAREE, and DPAEQKKAAVKEVKDP.

Belongs to the YihI family. As to quaternary structure, interacts with Der.

Its function is as follows. A GTPase-activating protein (GAP) that modifies Der/EngA GTPase function. May play a role in ribosome biogenesis. This is Der GTPase-activating protein YihI from Actinobacillus pleuropneumoniae serotype 7 (strain AP76).